A 663-amino-acid chain; its full sequence is uncharacterized protein (663 aa).

207-214 provides a ligand contact to ATP; sequence GPPGTGKT.

It belongs to the DNA2/NAM7 helicase family.

This is an uncharacterized protein from Methanocaldococcus jannaschii (strain ATCC 43067 / DSM 2661 / JAL-1 / JCM 10045 / NBRC 100440) (Methanococcus jannaschii).